A 374-amino-acid polypeptide reads, in one-letter code: SKP1-interacting partner 15 (374 aa).

The F-box domain occupies 3–48 (SSPVNCLPPDSLHQIFSSLPIRDIMICRSVCKFFNQLLTSQCFIEI).

In terms of assembly, part of a SCF (ASK-cullin-F-box) protein ligase complex. Interacts with SKP1A/ASK1, SKP1B/ASK2, ASK11 and ASK13.

Its subcellular location is the nucleus. It functions in the pathway protein modification; protein ubiquitination. Functionally, component of SCF(ASK-cullin-F-box) E3 ubiquitin ligase complexes, which may mediate the ubiquitination and subsequent proteasomal degradation of target proteins. The sequence is that of SKP1-interacting partner 15 (SKIP15) from Arabidopsis thaliana (Mouse-ear cress).